A 194-amino-acid chain; its full sequence is Imidazoleglycerol-phosphate dehydratase (194 aa).

It belongs to the imidazoleglycerol-phosphate dehydratase family.

The protein resides in the cytoplasm. The catalysed reaction is D-erythro-1-(imidazol-4-yl)glycerol 3-phosphate = 3-(imidazol-4-yl)-2-oxopropyl phosphate + H2O. It participates in amino-acid biosynthesis; L-histidine biosynthesis; L-histidine from 5-phospho-alpha-D-ribose 1-diphosphate: step 6/9. The chain is Imidazoleglycerol-phosphate dehydratase from Streptococcus gordonii (strain Challis / ATCC 35105 / BCRC 15272 / CH1 / DL1 / V288).